Here is a 150-residue protein sequence, read N- to C-terminus: Ribonuclease K6 (150 aa).

Positions 1–23 (MVLCFPLLLLVLVLWGQVCPLHA) are cleaved as a signal peptide. Histidine 38 functions as the Proton acceptor in the catalytic mechanism. 4 cysteine pairs are disulfide-bonded: cysteine 46–cysteine 104, cysteine 60–cysteine 114, cysteine 78–cysteine 129, and cysteine 85–cysteine 92. Asparagine 55 carries N-linked (GlcNAc...) asparagine glycosylation. Substrate contacts are provided by residues 61-65 (KPQNT) and lysine 86. The N-linked (GlcNAc...) asparagine glycan is linked to asparagine 100. Residue arginine 105 participates in substrate binding. The active-site Proton donor is histidine 145.

It belongs to the pancreatic ribonuclease family. As to quaternary structure, interacts (via N-terminus) with bacterial lipopolysaccharide (LPS).

It localises to the secreted. The protein localises to the lysosome. Its subcellular location is the cytoplasmic granule. Its function is as follows. Ribonuclease which shows a preference for the pyrimidines uridine and cytosine. Has potent antibacterial activity against a range of Gram-positive and Gram-negative bacteria, including P.aeruginosa, A.baumanii, M.luteus, S.aureus, E.faecalis, E.faecium, S.saprophyticus and E.coli. Causes loss of bacterial membrane integrity, and also promotes agglutination of Gram-negative bacteria. Probably contributes to urinary tract sterility. Bactericidal activity is independent of RNase activity. The protein is Ribonuclease K6 (RNASE6) of Aotus trivirgatus (Three-striped night monkey).